We begin with the raw amino-acid sequence, 529 residues long: HTH-type transcriptional activator Btr (529 aa).

The H-T-H motif DNA-binding region spans L182–K201. The Fe/B12 periplasmic-binding domain maps to K268–C528.

Binds with high affinity to both apo-bacillibactin and iron-bacillibactin.

It localises to the cytoplasm. Functionally, in iron-limited conditions, activates expression of the feuABCybbA operon, which encodes the bacillibactin uptake system. Acts by binding directly to a conserved direct repeat element upstream of the feuA promoter. Activity is increased in the presence of bacillibactin. The polypeptide is HTH-type transcriptional activator Btr (btr) (Bacillus subtilis (strain 168)).